The sequence spans 665 residues: Sodium-dependent phosphate transporter 1-B (665 aa).

A run of 6 helical transmembrane segments spans residues 26–46 (YMWL…SVGA), 67–87 (ACIL…AKVS), 107–127 (LMAG…AASF), 163–183 (IVAS…VLFY), 202–222 (ALPF…MFTG), and 235–255 (GVLL…WFAV). 2 disordered regions span residues 294-345 (VPEE…APKT) and 423-442 (ESEF…AQER). Residues 296–306 (EESSVLSSSTP) show a composition bias toward low complexity. Residues 329 to 338 (ADQKDCKESD) show a composition bias toward basic and acidic residues. The next 4 membrane-spanning stretches (helical) occupy residues 499–519 (VSML…FAHG), 548–568 (TPIW…WVWG), 588–608 (FSIE…GLPV), and 638–658 (IFMA…AIMA).

This sequence belongs to the inorganic phosphate transporter (PiT) (TC 2.A.20) family.

It is found in the membrane. Functionally, sodium-phosphate symporter which plays a fundamental housekeeping role in phosphate transport. This is Sodium-dependent phosphate transporter 1-B (slc20a1b) from Danio rerio (Zebrafish).